Consider the following 211-residue polypeptide: Uracil phosphoribosyltransferase (211 aa).

Residue 30 to 34 (KGLVR) participates in GTP binding. 5-phospho-alpha-D-ribose 1-diphosphate is bound by residues Arg79, Arg104, and 133–141 (DPMLATGIT). Uracil contacts are provided by residues Ile197 and 202-204 (GDA). A 5-phospho-alpha-D-ribose 1-diphosphate-binding site is contributed by Asp203.

Belongs to the UPRTase family. The cofactor is Mg(2+).

The enzyme catalyses UMP + diphosphate = 5-phospho-alpha-D-ribose 1-diphosphate + uracil. The protein operates within pyrimidine metabolism; UMP biosynthesis via salvage pathway; UMP from uracil: step 1/1. Allosterically activated by GTP. Catalyzes the conversion of uracil and 5-phospho-alpha-D-ribose 1-diphosphate (PRPP) to UMP and diphosphate. The sequence is that of Uracil phosphoribosyltransferase from Pyrobaculum islandicum (strain DSM 4184 / JCM 9189 / GEO3).